A 201-amino-acid chain; its full sequence is Large ribosomal subunit protein uL4 (201 aa).

The tract at residues 44–71 (RAQKTRAEVSGSGKKPWRQKGTGRARSG) is disordered.

The protein belongs to the universal ribosomal protein uL4 family. As to quaternary structure, part of the 50S ribosomal subunit.

Its function is as follows. One of the primary rRNA binding proteins, this protein initially binds near the 5'-end of the 23S rRNA. It is important during the early stages of 50S assembly. It makes multiple contacts with different domains of the 23S rRNA in the assembled 50S subunit and ribosome. In terms of biological role, forms part of the polypeptide exit tunnel. The polypeptide is Large ribosomal subunit protein uL4 (Actinobacillus succinogenes (strain ATCC 55618 / DSM 22257 / CCUG 43843 / 130Z)).